Consider the following 236-residue polypeptide: 2,3,4,5-tetrahydropyridine-2,6-dicarboxylate N-acetyltransferase (236 aa).

It belongs to the transferase hexapeptide repeat family. DapH subfamily.

It carries out the reaction (S)-2,3,4,5-tetrahydrodipicolinate + acetyl-CoA + H2O = L-2-acetamido-6-oxoheptanedioate + CoA. Its pathway is amino-acid biosynthesis; L-lysine biosynthesis via DAP pathway; LL-2,6-diaminopimelate from (S)-tetrahydrodipicolinate (acetylase route): step 1/3. In terms of biological role, catalyzes the transfer of an acetyl group from acetyl-CoA to tetrahydrodipicolinate. In Clostridium botulinum (strain Langeland / NCTC 10281 / Type F), this protein is 2,3,4,5-tetrahydropyridine-2,6-dicarboxylate N-acetyltransferase.